The sequence spans 151 residues: Transcriptional repressor NrdR (151 aa).

The segment at 3–34 (CPFCSSDNTRVIDSRPADDNSSIRRRRLCDDC) is a zinc-finger region. Residues 49 to 139 (LIVIKKDNNR…VYREFKDVNT (91 aa)) form the ATP-cone domain.

The protein belongs to the NrdR family. It depends on Zn(2+) as a cofactor.

Functionally, negatively regulates transcription of bacterial ribonucleotide reductase nrd genes and operons by binding to NrdR-boxes. The polypeptide is Transcriptional repressor NrdR (Agathobacter rectalis (strain ATCC 33656 / DSM 3377 / JCM 17463 / KCTC 5835 / VPI 0990) (Eubacterium rectale)).